A 227-amino-acid polypeptide reads, in one-letter code: uncharacterized protein (227 aa).

It is found in the virion. This is an uncharacterized protein from Acanthamoeba polyphaga (Amoeba).